Here is a 307-residue protein sequence, read N- to C-terminus: Protein FAM76A (307 aa).

Disordered regions lie at residues 161–181 and 287–307; these read SRLSSGSHYNSQKTLSTSSIQ and KQAAALSKGKKPEKSGAITSP. Residues 217–297 adopt a coiled-coil conformation; that stretch reads IIAQLKEEVA…QAAALSKGKK (81 aa).

This sequence belongs to the FAM76 family.

The protein is Protein FAM76A (FAM76A) of Gallus gallus (Chicken).